A 563-amino-acid chain; its full sequence is Dihydroxy-acid dehydratase (563 aa).

Position 50 (Cys50) interacts with [2Fe-2S] cluster. Residue Asp82 participates in Mg(2+) binding. Cys123 lines the [2Fe-2S] cluster pocket. 2 residues coordinate Mg(2+): Asp124 and Lys125. Position 125 is an N6-carboxylysine (Lys125). Cys195 contacts [2Fe-2S] cluster. Glu447 contacts Mg(2+). Ser473 acts as the Proton acceptor in catalysis.

The protein belongs to the IlvD/Edd family. As to quaternary structure, homodimer. It depends on [2Fe-2S] cluster as a cofactor. The cofactor is Mg(2+).

It carries out the reaction (2R)-2,3-dihydroxy-3-methylbutanoate = 3-methyl-2-oxobutanoate + H2O. The enzyme catalyses (2R,3R)-2,3-dihydroxy-3-methylpentanoate = (S)-3-methyl-2-oxopentanoate + H2O. It functions in the pathway amino-acid biosynthesis; L-isoleucine biosynthesis; L-isoleucine from 2-oxobutanoate: step 3/4. The protein operates within amino-acid biosynthesis; L-valine biosynthesis; L-valine from pyruvate: step 3/4. Functions in the biosynthesis of branched-chain amino acids. Catalyzes the dehydration of (2R,3R)-2,3-dihydroxy-3-methylpentanoate (2,3-dihydroxy-3-methylvalerate) into 2-oxo-3-methylpentanoate (2-oxo-3-methylvalerate) and of (2R)-2,3-dihydroxy-3-methylbutanoate (2,3-dihydroxyisovalerate) into 2-oxo-3-methylbutanoate (2-oxoisovalerate), the penultimate precursor to L-isoleucine and L-valine, respectively. The chain is Dihydroxy-acid dehydratase from Nostoc sp. (strain PCC 7120 / SAG 25.82 / UTEX 2576).